Reading from the N-terminus, the 130-residue chain is Small ribosomal subunit protein uS9 (130 aa).

Belongs to the universal ribosomal protein uS9 family.

In Xanthomonas campestris pv. campestris (strain 8004), this protein is Small ribosomal subunit protein uS9.